Reading from the N-terminus, the 296-residue chain is Phosphatidylglycerol--prolipoprotein diacylglyceryl transferase (296 aa).

The next 3 membrane-spanning stretches (helical) occupy residues 17–37 (LAVR…IVVG), 59–79 (MMFY…VLFY), and 97–117 (GGMS…LFAW). R142 contacts a 1,2-diacyl-sn-glycero-3-phospho-(1'-sn-glycerol). 2 consecutive transmembrane segments (helical) span residues 230–250 (MGAI…TVEF) and 265–285 (LSMG…MMIW).

This sequence belongs to the Lgt family.

The protein resides in the cell inner membrane. It carries out the reaction L-cysteinyl-[prolipoprotein] + a 1,2-diacyl-sn-glycero-3-phospho-(1'-sn-glycerol) = an S-1,2-diacyl-sn-glyceryl-L-cysteinyl-[prolipoprotein] + sn-glycerol 1-phosphate + H(+). It functions in the pathway protein modification; lipoprotein biosynthesis (diacylglyceryl transfer). Catalyzes the transfer of the diacylglyceryl group from phosphatidylglycerol to the sulfhydryl group of the N-terminal cysteine of a prolipoprotein, the first step in the formation of mature lipoproteins. The chain is Phosphatidylglycerol--prolipoprotein diacylglyceryl transferase from Burkholderia mallei (strain NCTC 10247).